Here is a 420-residue protein sequence, read N- to C-terminus: rRNA methyltransferase 3, mitochondrial (420 aa).

A mitochondrion-targeting transit peptide spans 1–40; sequence MAALVRPARFVVRPLLQVVQAWDLDARRWVRALRRSPVKV. A disordered region spans residues 49 to 88; that stretch reads EQKRAPGKQPRKAPSEASAQEQREKQPLEESASRAPSTWE. Over residues 69-80 the composition is skewed to basic and acidic residues; the sequence is EQREKQPLEESA. S-adenosyl-L-methionine-binding residues include Gly-356, Ile-380, and Leu-389.

The protein belongs to the class IV-like SAM-binding methyltransferase superfamily. RNA methyltransferase TrmH family. Expressed at same level in normal liver and hepatocarcinoma.

The protein resides in the mitochondrion. It carries out the reaction guanosine(1370) in 16S rRNA + S-adenosyl-L-methionine = 2'-O-methylguanosine(1370) in 16S rRNA + S-adenosyl-L-homocysteine + H(+). Functionally, S-adenosyl-L-methionine-dependent 2'-O-ribose methyltransferase that catalyzes the formation of 2'-O-methylguanosine at position 1370 (Gm1370) in the 16S mitochondrial large subunit ribosomal RNA (mtLSU rRNA), a conserved modification in the peptidyl transferase domain of the mtLSU rRNA. Also required for formation of 2'-O-methyluridine at position 1369 (Um1369) mediated by MRM2. The protein is rRNA methyltransferase 3, mitochondrial of Homo sapiens (Human).